The chain runs to 476 residues: Transmembrane transporter FPSE_08127 (476 aa).

The helical transmembrane segment at 72 to 92 (ILAIPAALGALGSIGGSLCII) threads the bilayer. An N-linked (GlcNAc...) asparagine glycan is attached at asparagine 111. Helical transmembrane passes span 133–153 (LVGV…VVAI), 164–184 (GTCT…FSAI), 192–212 (WLTW…VVAV), 231–251 (WAPI…NIFI), 275–295 (ACLV…LVIY), 317–337 (VAYG…QHVA), 364–384 (LGIN…VPIL), 387–407 (LLGL…PALL), and 431–451 (LIMM…VVLI).

This sequence belongs to the amino acid/polyamine transporter 2 family.

Its subcellular location is the membrane. Transmembrane transporter; part of the Fusarium detoxification of benzoxazolinone cluster involved in the degradation of benzoxazolinones produced by the host plant. Maize, wheat, and rye produce the 2 benzoxazinone phytoanticipins 2,4-dihy-droxy-7-methoxy-1,4-benzoxazin-3-one (DIMBOA) and 2,4-dihydroxy-1,4-benzoxazin-3-one (DIBOA) that, due to their inherent instability once released, spontaneously degrade to the more stable corresponding benzoxazolinones, 6-methoxy-2-benzoxazolinone (MBOA) and 2-benzoxazolinone (BOA), respectively. FPSE_08127 is proposed to shuttle metabolites of benzoxazolinone degradation. The polypeptide is Transmembrane transporter FPSE_08127 (Fusarium pseudograminearum (strain CS3096) (Wheat and barley crown-rot fungus)).